A 973-amino-acid polypeptide reads, in one-letter code: Sodium/calcium exchanger 1 (973 aa).

Residues 1-35 (MYNMRRLSLSPTFSMGFHLLVTVSLLFSHVDHVIA) form the signal peptide. At 36–74 (ETEMEGEGNETGECTGSYYCKKGVILPIWEPQDPSFGDK) the chain is on the extracellular side. Asn-44 carries N-linked (GlcNAc...) asparagine glycosylation. Residues 75–95 (IARATVYFVAMVYMFLGVSII) traverse the membrane as a helical segment. At 96-136 (ADRFMSSIEVITSQEKEITIKKPNGETTKTTVRIWNETVSN) the chain is on the cytoplasmic side. A helical transmembrane segment spans residues 137–157 (LTLMALGSSAPEILLSVIEVC). One copy of the Alpha-1 repeat lies at 141 to 181 (ALGSSAPEILLSVIEVCGHNFTAGDLGPSTIVGSAAFNMFI). Residues 158–170 (GHNFTAGDLGPST) are Extracellular-facing. Residue Asn-160 is glycosylated (N-linked (GlcNAc...) asparagine). Residues 171–191 (IVGSAAFNMFIIIALCVYVVP) form a helical membrane-spanning segment. Over 192 to 204 (DGETRKIKHLRVF) the chain is Cytoplasmic. Residues 205–225 (FVTAAWSIFAYTWLYIILSVI) traverse the membrane as a helical segment. Residues 226 to 231 (SPGVVE) are Extracellular-facing. A helical membrane pass occupies residues 232–252 (VWEGLLTFFFFPICVVFAWVA). Over 253–800 (DRRLLFYKYV…FVPPTEYWNG (548 aa)) the chain is Cytoplasmic. Residues 254-273 (RRLLFYKYVYKRYRAGKQRG) form a putative calmodulin-binding region region. A phosphoserine mark is found at Ser-285 and Ser-392. 2 consecutive Calx-beta domains span residues 396–496 (VNTE…VHLS) and 527–627 (ATVT…LEIG). Ca(2+) is bound by residues Glu-420, Asp-456, Asp-481, Asp-482, Ile-484, Glu-486, Glu-489, Asp-533, Asp-534, Asp-535, Glu-551, Asp-587, Asp-613, Glu-614, Glu-615, and Glu-718. Residues 801–821 (WACFIVSILMIGLLTAFIGDL) traverse the membrane as a helical segment. The Extracellular portion of the chain corresponds to 822-824 (ASH). The chain crosses the membrane as a helical span at residues 825-845 (FGCTIGLKDSVTAVVFVALGT). An Alpha-2 repeat occupies 842 to 878 (ALGTSVPDTFASKVAATQDQYADASIGNVTGSNAVNV). Topologically, residues 846–874 (SVPDTFASKVAATQDQYADASIGNVTGSN) are cytoplasmic. The chain crosses the membrane as a helical span at residues 875 to 895 (AVNVFLGIGVAWSIAAIYHAA). At 896-906 (NGEQFKVSPGT) the chain is on the extracellular side. A helical transmembrane segment spans residues 907–927 (LAFSVTLFTIFAFINVGVLLY). At 928–944 (RRRPEIGGELGGPRTAK) the chain is on the cytoplasmic side. A helical membrane pass occupies residues 945-965 (LLTSCLFVLLWLLYIFFSSLE). Topologically, residues 966 to 973 (AYCHIKGF) are extracellular.

It belongs to the Ca(2+):cation antiporter (CaCA) (TC 2.A.19) family. SLC8 subfamily. As to expression, detected primarily in heart and at lower levels in brain. Expressed in cardiac sarcolemma, brain, kidney, liver, pancreas, skeletal muscle, placenta and lung.

Its subcellular location is the cell membrane. It catalyses the reaction Ca(2+)(in) + 3 Na(+)(out) = Ca(2+)(out) + 3 Na(+)(in). Its activity is regulated as follows. Activated by micromolar levels of Ca(2+). Functionally, mediates the exchange of one Ca(2+) ion against three to four Na(+) ions across the cell membrane, and thereby contributes to the regulation of cytoplasmic Ca(2+) levels and Ca(2+)-dependent cellular processes. Contributes to Ca(2+) transport during excitation-contraction coupling in muscle. In a first phase, voltage-gated channels mediate the rapid increase of cytoplasmic Ca(2+) levels due to release of Ca(2+) stores from the endoplasmic reticulum. SLC8A1 mediates the export of Ca(2+) from the cell during the next phase, so that cytoplasmic Ca(2+) levels rapidly return to baseline. Required for normal embryonic heart development and the onset of heart contractions. The sequence is that of Sodium/calcium exchanger 1 (SLC8A1) from Homo sapiens (Human).